The chain runs to 248 residues: Probable transcriptional regulatory protein PsycPRwf_1013 (248 aa).

It belongs to the TACO1 family.

It is found in the cytoplasm. The chain is Probable transcriptional regulatory protein PsycPRwf_1013 from Psychrobacter sp. (strain PRwf-1).